A 551-amino-acid polypeptide reads, in one-letter code: Serine/threonine-protein kinase ppk21 (551 aa).

A disordered region spans residues 24–43 (EARGERNPVKPQSSNVVPGT). Residues 55–315 (YVFGDIIGDG…TQQIKQFPFF (261 aa)) enclose the Protein kinase domain. ATP contacts are provided by residues 65–67 (SFS) and Lys-84. Residues 86-131 (LDKKYIVKENKVKYVNIERDSMMRLNGFPGISRLFHTFQDDLKLYY) form a PIF-pocket region. Residues 134–136 (ELA) and Glu-140 each bind ATP. The Proton acceptor role is filled by Asp-179. ATP contacts are provided by Glu-183 and Asp-197. Ser-220 carries the post-translational modification Phosphoserine; by autocatalysis. Phosphoserine is present on Ser-538.

It belongs to the protein kinase superfamily. AGC Ser/Thr protein kinase family. PDPK1 subfamily.

It localises to the cytoplasm. Its subcellular location is the nucleus. The protein resides in the cytoskeleton. It is found in the microtubule organizing center. The protein localises to the spindle pole body. It carries out the reaction L-seryl-[protein] + ATP = O-phospho-L-seryl-[protein] + ADP + H(+). The enzyme catalyses L-threonyl-[protein] + ATP = O-phospho-L-threonyl-[protein] + ADP + H(+). This is Serine/threonine-protein kinase ppk21 (ppk21) from Schizosaccharomyces pombe (strain 972 / ATCC 24843) (Fission yeast).